We begin with the raw amino-acid sequence, 623 residues long: Translation initiation factor IF-2 (623 aa).

Residues 1–18 show a composition bias toward low complexity; that stretch reads MTLNKKTNNENSSKTTPK. Disordered stretches follow at residues 1–21 and 92–115; these read MTLN…KLSK and PQKE…KLQA. Residues 125–293 enclose the tr-type G domain; sequence KTPPIVTIMG…ILLFSEIQNL (169 aa). The segment at 134 to 141 is G1; sequence GHVDHGKT. Position 134 to 141 (134 to 141) interacts with GTP; the sequence is GHVDHGKT. The segment at 159–163 is G2; sequence GITQH. The G3 stretch occupies residues 180-183; that stretch reads DTPG. Residues 180-184 and 234-237 each bind GTP; these read DTPGH and NKVD. Positions 234-237 are G4; it reads NKVD. Positions 270-272 are G5; it reads SAL.

This sequence belongs to the TRAFAC class translation factor GTPase superfamily. Classic translation factor GTPase family. IF-2 subfamily.

The protein resides in the cytoplasm. One of the essential components for the initiation of protein synthesis. Protects formylmethionyl-tRNA from spontaneous hydrolysis and promotes its binding to the 30S ribosomal subunits. Also involved in the hydrolysis of GTP during the formation of the 70S ribosomal complex. This chain is Translation initiation factor IF-2, found in Aster yellows witches'-broom phytoplasma (strain AYWB).